A 498-amino-acid chain; its full sequence is MDPLGAPSQFVDVDTLLSWGDSYEDEVDCADSTAEAFQEDASRSPFVYSRDVNGKVVLWKGDVALLNCTAIVNTSNESLTDKNPVSESIFMLAGPDLKEDLQKLKGCRTGEAKLTKGFNLAARFIIHTVGPKYKSRYRTAAESSLYSCYRNVLQLAKEQSMSSVGFCVINSAKRGYPLEDATHIALRTVRRFLEIHGENIEKVVFAVSELEEATYQKLLPLYFPRSLKEEIRSLPYLPADIGNAEGEPVVPERQIRISEKPGASEDNEEEDEDEGLGVDLSFIGSHAFARMEGDIDKQRKLILQGQLSEAALQKQHQRNYNRWLCQARSEDLSDIASLKALYQTGVDNCGRTVMVVVGRNIPVTLIDMDKALLYFIHVMDHIAVKEYVLVYFHTLTSDYNHLDSDFLKKLYDVVDIKYKRNLKAVYFVHPTFRSKVSTWFFTTFSVSGLKDKIHHVDSLQQLFSAISPEQIDFPPFVLEYDARENGPYFASYPPSPDL.

The region spanning arginine 43 to phenylalanine 223 is the Macro domain. The interval proline 248–glycine 275 is disordered. The span at arginine 253–alanine 263 shows a compositional bias: basic and acidic residues. The span at glutamate 265–glycine 275 shows a compositional bias: acidic residues. Serine 281 carries the post-translational modification Phosphoserine. Positions aspartate 334–alanine 482 constitute a CRAL-TRIO domain.

The protein belongs to the GDAP2 family. Expressed at high levels in brain and testis, and at low levels in liver and kidney.

The chain is Ganglioside-induced differentiation-associated protein 2 (Gdap2) from Mus musculus (Mouse).